Here is a 507-residue protein sequence, read N- to C-terminus: Histidine ammonia-lyase (507 aa).

The segment at residues 143–145 is a cross-link (5-imidazolinone (Ala-Gly)); the sequence is ASG. S144 is subject to 2,3-didehydroalanine (Ser).

The protein belongs to the PAL/histidase family. Post-translationally, contains an active site 4-methylidene-imidazol-5-one (MIO), which is formed autocatalytically by cyclization and dehydration of residues Ala-Ser-Gly.

The protein localises to the cytoplasm. It catalyses the reaction L-histidine = trans-urocanate + NH4(+). Its pathway is amino-acid degradation; L-histidine degradation into L-glutamate; N-formimidoyl-L-glutamate from L-histidine: step 1/3. This is Histidine ammonia-lyase from Alkaliphilus oremlandii (strain OhILAs) (Clostridium oremlandii (strain OhILAs)).